The primary structure comprises 394 residues: Multidrug resistance protein D (394 aa).

Over 1 to 8 (MKRQRNVN) the chain is Cytoplasmic. Residues 9 to 29 (LLLMLVLLVAVGQMAQTIYIP) form a helical membrane-spanning segment. The Periplasmic segment spans residues 30–46 (AIADMARDLNVREGAVQ). A helical transmembrane segment spans residues 47–67 (SVMGAYLLTYGVSQLFYGPIS). Topologically, residues 68 to 73 (DRVGRR) are cytoplasmic. Residues 74–94 (PVILVGMSIFMLATLVAVTTS) form a helical membrane-spanning segment. Position 95 (serine 95) is a topological domain, periplasmic. The chain crosses the membrane as a helical span at residues 96 to 116 (LTVLIAASAMQGMGTGVGGVM). Residues 117–134 (ARTLPRDLYERTQLRHAN) are Cytoplasmic-facing. The chain crosses the membrane as a helical span at residues 135-155 (SLLNMGILVSPLLAPLIGGLL). Over 156 to 162 (DTMWNWR) the chain is Periplasmic. A helical transmembrane segment spans residues 163–183 (ACYLFLLVLCAGVTFSMARWM). At 184-212 (PETRPVDAPRTRLLTSYKTLFGNSGFNCY) the chain is on the cytoplasmic side. A helical transmembrane segment spans residues 213–233 (LLMLIGGLAGIAAFEACSGVL). Topologically, residues 234–242 (MGAVLGLSS) are periplasmic. Residues 243–263 (MTVSILFILPIPAAFFGAWFA) form a helical membrane-spanning segment. Residues 264 to 276 (GRPNKRFSTLMWQ) are Cytoplasmic-facing. The chain crosses the membrane as a helical span at residues 277 to 297 (SVICCLLAGLLMWIPDWFGVM). Position 298 (asparagine 298) is a topological domain, periplasmic. Residues 299–319 (VWTLLVPAALFFFGAGMLFPL) form a helical membrane-spanning segment. Topologically, residues 320–329 (ATSGAMEPFP) are cytoplasmic. A helical transmembrane segment spans residues 330-350 (FLAGTAGALVGGLQNIGSGVL). Residues 351–364 (ASLSAMLPQTGQGS) lie on the Periplasmic side of the membrane. Residues 365-385 (LGLLMTLMGLLIVLCWLPLAT) traverse the membrane as a helical segment. Residues 386-394 (RMSHQGQPV) lie on the Cytoplasmic side of the membrane.

Belongs to the major facilitator superfamily.

The protein resides in the cell inner membrane. In terms of biological role, multidrug resistance pump that participates in a low energy shock adaptive response. In Escherichia coli (strain K12), this protein is Multidrug resistance protein D (emrD).